The sequence spans 65 residues: Large ribosomal subunit protein uL29 (65 aa).

It belongs to the universal ribosomal protein uL29 family.

The polypeptide is Large ribosomal subunit protein uL29 (Lactobacillus helveticus (strain DPC 4571)).